Reading from the N-terminus, the 384-residue chain is Mitogen-activated protein kinase 8 (384 aa).

Positions 26 to 321 constitute a Protein kinase domain; sequence YQNLRPIGSG…VDEALQHPYI (296 aa). ATP is bound by residues 33-38 and Lys-55; that span reads GSGAQG. Asp-151 serves as the catalytic Proton acceptor. Residue Thr-183 is modified to Phosphothreonine. The short motif at 183 to 185 is the TXY element; the sequence is TPY. The residue at position 185 (Tyr-185) is a Phosphotyrosine.

Belongs to the protein kinase superfamily. CMGC Ser/Thr protein kinase family. MAP kinase subfamily. The cofactor is Mg(2+). Post-translationally, dually phosphorylated on Thr-183 and Tyr-185, which activates the enzyme.

The protein localises to the cytoplasm. It localises to the nucleus. The protein resides in the synapse. It catalyses the reaction L-seryl-[protein] + ATP = O-phospho-L-seryl-[protein] + ADP + H(+). It carries out the reaction L-threonyl-[protein] + ATP = O-phospho-L-threonyl-[protein] + ADP + H(+). With respect to regulation, activated by threonine and tyrosine phosphorylation. In terms of biological role, responds to activation by environmental stress and pro-inflammatory cytokines by phosphorylating a number of transcription factors, primarily components of AP-1 such as c-Jun and ATF2 and thus regulates AP-1 transcriptional activity. May play a role in the regulation of the circadian clock. The polypeptide is Mitogen-activated protein kinase 8 (mapk8) (Danio rerio (Zebrafish)).